Here is a 388-residue protein sequence, read N- to C-terminus: Succinyl-diaminopimelate desuccinylase (388 aa).

Residue His84 coordinates Zn(2+). The active site involves Asp86. Asp115 provides a ligand contact to Zn(2+). Glu146 acts as the Proton acceptor in catalysis. Positions 147, 175, and 360 each coordinate Zn(2+).

The protein belongs to the peptidase M20A family. DapE subfamily. As to quaternary structure, homodimer. Requires Zn(2+) as cofactor. It depends on Co(2+) as a cofactor.

It catalyses the reaction N-succinyl-(2S,6S)-2,6-diaminopimelate + H2O = (2S,6S)-2,6-diaminopimelate + succinate. It functions in the pathway amino-acid biosynthesis; L-lysine biosynthesis via DAP pathway; LL-2,6-diaminopimelate from (S)-tetrahydrodipicolinate (succinylase route): step 3/3. Functionally, catalyzes the hydrolysis of N-succinyl-L,L-diaminopimelic acid (SDAP), forming succinate and LL-2,6-diaminopimelate (DAP), an intermediate involved in the bacterial biosynthesis of lysine and meso-diaminopimelic acid, an essential component of bacterial cell walls. This chain is Succinyl-diaminopimelate desuccinylase, found in Helicobacter pylori (strain J99 / ATCC 700824) (Campylobacter pylori J99).